Reading from the N-terminus, the 294-residue chain is 33 kDa chaperonin (294 aa).

Cystine bridges form between Cys-239–Cys-241 and Cys-272–Cys-275.

This sequence belongs to the HSP33 family. Post-translationally, under oxidizing conditions two disulfide bonds are formed involving the reactive cysteines. Under reducing conditions zinc is bound to the reactive cysteines and the protein is inactive.

It is found in the cytoplasm. Redox regulated molecular chaperone. Protects both thermally unfolding and oxidatively damaged proteins from irreversible aggregation. Plays an important role in the bacterial defense system toward oxidative stress. The polypeptide is 33 kDa chaperonin (Listeria innocua serovar 6a (strain ATCC BAA-680 / CLIP 11262)).